The following is a 286-amino-acid chain: Formamidopyrimidine-DNA glycosylase (286 aa).

Pro2 (schiff-base intermediate with DNA) is an active-site residue. Residue Glu3 is the Proton donor of the active site. The active-site Proton donor; for beta-elimination activity is Lys60. 3 residues coordinate DNA: His103, Arg122, and Arg167. The FPG-type zinc finger occupies 252 to 286 (WVYRRNQKPCRKCGTLIEKTKVAGRSTHWCPNCQN). Arg276 acts as the Proton donor; for delta-elimination activity in catalysis.

Belongs to the FPG family. In terms of assembly, monomer. The cofactor is Zn(2+).

The enzyme catalyses Hydrolysis of DNA containing ring-opened 7-methylguanine residues, releasing 2,6-diamino-4-hydroxy-5-(N-methyl)formamidopyrimidine.. The catalysed reaction is 2'-deoxyribonucleotide-(2'-deoxyribose 5'-phosphate)-2'-deoxyribonucleotide-DNA = a 3'-end 2'-deoxyribonucleotide-(2,3-dehydro-2,3-deoxyribose 5'-phosphate)-DNA + a 5'-end 5'-phospho-2'-deoxyribonucleoside-DNA + H(+). Functionally, involved in base excision repair of DNA damaged by oxidation or by mutagenic agents. Acts as a DNA glycosylase that recognizes and removes damaged bases. Has a preference for oxidized purines, such as 7,8-dihydro-8-oxoguanine (8-oxoG). Has AP (apurinic/apyrimidinic) lyase activity and introduces nicks in the DNA strand. Cleaves the DNA backbone by beta-delta elimination to generate a single-strand break at the site of the removed base with both 3'- and 5'-phosphates. The sequence is that of Formamidopyrimidine-DNA glycosylase from Prochlorococcus marinus (strain MIT 9211).